A 277-amino-acid polypeptide reads, in one-letter code: Large ribosomal subunit protein mL46 (277 aa).

Residue lysine 228 is modified to N6-acetyllysine.

Belongs to the mitochondrion-specific ribosomal protein mL46 family. Component of the mitochondrial ribosome large subunit (39S) which comprises a 16S rRNA and about 50 distinct proteins.

The protein resides in the mitochondrion. This chain is Large ribosomal subunit protein mL46 (MRPL46), found in Bos taurus (Bovine).